Consider the following 320-residue polypeptide: Glutaminyl-peptide cyclotransferase (320 aa).

Over residues 1-12 the composition is skewed to basic residues; the sequence is MATRSPYKRQTK. Residues 1–22 are disordered; sequence MATRSPYKRQTKRSMIQSLPAS. The Cytoplasmic portion of the chain corresponds to 1–36; the sequence is MATRSPYKRQTKRSMIQSLPASSSASSRRRFISRKR. A helical; Signal-anchor for type II membrane protein transmembrane segment spans residues 37 to 57; it reads FAMMIPLALLSGAVFLFFMPF. The Lumenal portion of the chain corresponds to 58 to 320; that stretch reads NSWGQSSGSS…GNYIEQQCLV (263 aa). N-linked (GlcNAc...) asparagine glycans are attached at residues Asn-99 and Asn-163.

Belongs to the plant glutaminyl-peptide cyclotransferase family. Post-translationally, glycosylated.

It is found in the endoplasmic reticulum membrane. The enzyme catalyses N-terminal L-glutaminyl-[peptide] = N-terminal 5-oxo-L-prolyl-[peptide] + NH4(+). In terms of biological role, converts glutamine and N-terminal glutamyl residues in peptides to 5-oxoproline and 5-oxoproline residues. Not involved in the major pathway for 5-oxoproline production. The sequence is that of Glutaminyl-peptide cyclotransferase (QCT) from Arabidopsis thaliana (Mouse-ear cress).